The chain runs to 245 residues: Orotidine 5'-phosphate decarboxylase (245 aa).

Substrate is bound by residues D22, K44, 71–80 (DLKFHDIPNT), T131, R192, Q201, G221, and R222. The Proton donor role is filled by K73.

This sequence belongs to the OMP decarboxylase family. Type 1 subfamily. As to quaternary structure, homodimer.

It catalyses the reaction orotidine 5'-phosphate + H(+) = UMP + CO2. It participates in pyrimidine metabolism; UMP biosynthesis via de novo pathway; UMP from orotate: step 2/2. Its function is as follows. Catalyzes the decarboxylation of orotidine 5'-monophosphate (OMP) to uridine 5'-monophosphate (UMP). The sequence is that of Orotidine 5'-phosphate decarboxylase from Salmonella typhi.